The chain runs to 523 residues: MGKPTSSGCDWRRFLRNHWLLLSTVAAVVLGIVLGVVVRGHSELSNLDKFYFAFPGEILMRMLKLVILPLIVSSMITGVAALDSNVSGKIGLRAVVYYFSTTVIAVILGIVLVVSIKPGVTQKVNDINRTGKTPEVSTMDAMLDLIRNMFPENLVQACFQQYKTKREEVKPVGDPGGNATEVSVTTAMTTMSENKTKEYKIVGLYSDGINVLGLIIFCLVFGLVIGKMGEKGQILVDFFNALSDATMKIVQIIMCYMPIGILFLIAGKIIEVEDWEIFRKLGLYMATVLSGLAIHSLIVLPLLYFIVVRKNPFRFALGMAQALLTALMISSSSATLPVTFRCAEEKNQVDKRITRFVLPVGATINMDGTALYEAVAAVFIAQLNGLDLSIGQIVTISITATAASIGAAGVPQAGLVTMVIVLSAVGLPAEDVTLIIAVDWLLDRFRTMVNVLGDAFGTGIVEKLSKKELEQMDVSSEVNIVNPFALEPTTLDNEDSDTKKSYVNGGFAVDKSDTISFTQTSQF.

At 1–18 (MGKPTSSGCDWRRFLRNH) the chain is on the cytoplasmic side. Residues 19–38 (WLLLSTVAAVVLGIVLGVVV) traverse the membrane as a helical segment. Over 39 to 61 (RGHSELSNLDKFYFAFPGEILMR) the chain is Extracellular. A helical transmembrane segment spans residues 62-82 (MLKLVILPLIVSSMITGVAAL). Residues 83 to 93 (DSNVSGKIGLR) are Cytoplasmic-facing. Residues 94–114 (AVVYYFSTTVIAVILGIVLVV) form a helical membrane-spanning segment. Tyr-98, Thr-101, and Thr-102 together coordinate Na(+). The Extracellular segment spans residues 115-204 (SIKPGVTQKV…KTKEYKIVGL (90 aa)). N-linked (GlcNAc...) asparagine glycosylation is found at Asn-128, Asn-178, and Asn-194. Residues 205-228 (YSDGINVLGLIIFCLVFGLVIGKM) form a helical membrane-spanning segment. Residues 229–237 (GEKGQILVD) lie on the Cytoplasmic side of the membrane. A helical transmembrane segment spans residues 238–265 (FFNALSDATMKIVQIIMCYMPIGILFLI). The Extracellular portion of the chain corresponds to 266 to 285 (AGKIIEVEDWEIFRKLGLYM). The helical transmembrane segment at 286-307 (ATVLSGLAIHSLIVLPLLYFIV) threads the bilayer. The Cytoplasmic segment spans residues 308–312 (VRKNP). Positions 313-343 (FRFALGMAQALLTALMISSSSATLPVTFRCA) form an intramembrane region, discontinuously helical. L-aspartate-binding residues include Ser-330 and Ser-332. At 344–352 (EEKNQVDKR) the chain is on the cytoplasmic side. A helical membrane pass occupies residues 353–379 (ITRFVLPVGATINMDGTALYEAVAAVF). Gly-361, Thr-363, Asn-365, and Asp-367 together coordinate Na(+). Thr-369 contributes to the L-aspartate binding site. At 380–392 (IAQLNGLDLSIGQ) the chain is on the extracellular side. The segment at residues 393–426 (IVTISITATAASIGAAGVPQAGLVTMVIVLSAVG) is an intramembrane region (discontinuously helical). Ser-404, Ile-405, and Ala-407 together coordinate Na(+). Val-410 serves as a coordination point for L-aspartate. Over 427-439 (LPAEDVTLIIAVD) the chain is Extracellular. The helical transmembrane segment at 440–461 (WLLDRFRTMVNVLGDAFGTGIV) threads the bilayer. 3 residues coordinate L-aspartate: Arg-446, Thr-447, and Asn-450. Na(+) contacts are provided by Asn-450 and Asp-454. Over 462-523 (EKLSKKELEQ…TISFTQTSQF (62 aa)) the chain is Cytoplasmic. Phosphoserine is present on residues Ser-516 and Ser-521.

Belongs to the dicarboxylate/amino acid:cation symporter (DAACS) (TC 2.A.23) family. SLC1A1 subfamily. Homotrimer. Interacts with ARL6IP5. Interacts with RTN2 (via N-terminus); the interaction promotes cell surface expression of SLC1A1. Interacts with SORCS2; this interaction is important for normal expression at the cell membrane. In terms of tissue distribution, detected on neurons in the brain cortex, dentate gyrus and hippocampus CA2 region (at protein level). Expressed in whole brain, brain cortex, hippocampus, cerebellum, lung, kidney, small intestine and skeletal muscle. Expressed in the renal outer medulla, medullary ray and cortex (at protein level).

The protein resides in the cell membrane. It is found in the apical cell membrane. The protein localises to the synapse. Its subcellular location is the synaptosome. It localises to the early endosome membrane. The protein resides in the late endosome membrane. It is found in the recycling endosome membrane. The catalysed reaction is K(+)(in) + L-glutamate(out) + 3 Na(+)(out) + H(+)(out) = K(+)(out) + L-glutamate(in) + 3 Na(+)(in) + H(+)(in). It catalyses the reaction K(+)(in) + L-aspartate(out) + 3 Na(+)(out) + H(+)(out) = K(+)(out) + L-aspartate(in) + 3 Na(+)(in) + H(+)(in). It carries out the reaction D-aspartate(out) + K(+)(in) + 3 Na(+)(out) + H(+)(out) = D-aspartate(in) + K(+)(out) + 3 Na(+)(in) + H(+)(in). The enzyme catalyses K(+)(in) + L-cysteine(out) + 3 Na(+)(out) + H(+)(out) = K(+)(out) + L-cysteine(in) + 3 Na(+)(in) + H(+)(in). Functionally, sodium-dependent, high-affinity amino acid transporter that mediates the uptake of L-glutamate and also L-aspartate and D-aspartate. Can also transport L-cysteine. Functions as a symporter that transports one amino acid molecule together with two or three Na(+) ions and one proton, in parallel with the counter-transport of one K(+) ion. Mediates Cl(-) flux that is not coupled to amino acid transport; this avoids the accumulation of negative charges due to aspartate and Na(+) symport. Plays an important role in L-glutamate and L-aspartate reabsorption in renal tubuli. Plays a redundant role in the rapid removal of released glutamate from the synaptic cleft, which is essential for terminating the postsynaptic action of glutamate. Contributes to glutathione biosynthesis and protection against oxidative stress via its role in L-glutamate and L-cysteine transport. Negatively regulated by ARL6IP5. The protein is Excitatory amino acid transporter 3 (Slc1a1) of Mus musculus (Mouse).